The following is a 1025-amino-acid chain: Multidrug resistance protein MdtC (1025 aa).

The next 12 membrane-spanning stretches (helical) occupy residues 3–23 (FFAL…AITL), 333–353 (EVEQ…FLFL), 360–380 (IIPA…MYLC), 387–407 (LSLM…IVVL), 431–451 (VGFT…PLLL), 463–483 (FAVT…TLTP), 528–548 (LVGV…ISIP), 853–873 (VILI…LYES), 875–895 (VHPL…LLAL), 897–917 (LFNA…IGIV), 953–973 (PIMM…LSGG), and 984–1004 (ITIV…TPVV).

It belongs to the resistance-nodulation-cell division (RND) (TC 2.A.6) family. MdtC subfamily. In terms of assembly, part of a tripartite efflux system composed of MdtA, MdtB and MdtC. MdtC forms a heteromultimer with MdtB.

Its subcellular location is the cell inner membrane. Its function is as follows. The MdtABC tripartite complex confers resistance against novobiocin and deoxycholate. The chain is Multidrug resistance protein MdtC from Escherichia coli O8 (strain IAI1).